A 768-amino-acid polypeptide reads, in one-letter code: Phosphoribosylformylglycinamidine synthase subunit PurL (768 aa).

His-46 is an active-site residue. ATP is bound by residues Tyr-49 and Lys-88. Glu-90 is a binding site for Mg(2+). Substrate contacts are provided by residues 91 to 94 (SHNH) and Arg-113. His-92 serves as the catalytic Proton acceptor. Asp-114 contacts Mg(2+). Gln-237 lines the substrate pocket. Residue Asp-265 participates in Mg(2+) binding. 309–311 (ESQ) is a substrate binding site. Asp-514 and Gly-551 together coordinate ATP. Asn-552 provides a ligand contact to Mg(2+). Ser-554 contacts substrate.

Belongs to the FGAMS family. In terms of assembly, monomer. Part of the FGAM synthase complex composed of 1 PurL, 1 PurQ and 2 PurS subunits.

The protein resides in the cytoplasm. The enzyme catalyses N(2)-formyl-N(1)-(5-phospho-beta-D-ribosyl)glycinamide + L-glutamine + ATP + H2O = 2-formamido-N(1)-(5-O-phospho-beta-D-ribosyl)acetamidine + L-glutamate + ADP + phosphate + H(+). It functions in the pathway purine metabolism; IMP biosynthesis via de novo pathway; 5-amino-1-(5-phospho-D-ribosyl)imidazole from N(2)-formyl-N(1)-(5-phospho-D-ribosyl)glycinamide: step 1/2. In terms of biological role, part of the phosphoribosylformylglycinamidine synthase complex involved in the purines biosynthetic pathway. Catalyzes the ATP-dependent conversion of formylglycinamide ribonucleotide (FGAR) and glutamine to yield formylglycinamidine ribonucleotide (FGAM) and glutamate. The FGAM synthase complex is composed of three subunits. PurQ produces an ammonia molecule by converting glutamine to glutamate. PurL transfers the ammonia molecule to FGAR to form FGAM in an ATP-dependent manner. PurS interacts with PurQ and PurL and is thought to assist in the transfer of the ammonia molecule from PurQ to PurL. This chain is Phosphoribosylformylglycinamidine synthase subunit PurL, found in Synechocystis sp. (strain ATCC 27184 / PCC 6803 / Kazusa).